We begin with the raw amino-acid sequence, 276 residues long: 3-methyl-2-oxobutanoate hydroxymethyltransferase (276 aa).

Residues aspartate 45 and aspartate 84 each contribute to the Mg(2+) site. Residues 45 to 46 (DS), aspartate 84, and lysine 114 contribute to the 3-methyl-2-oxobutanoate site. Glutamate 116 contributes to the Mg(2+) binding site. The active-site Proton acceptor is glutamate 183.

It belongs to the PanB family. As to quaternary structure, homodecamer; pentamer of dimers. The cofactor is Mg(2+).

The protein resides in the cytoplasm. It catalyses the reaction 3-methyl-2-oxobutanoate + (6R)-5,10-methylene-5,6,7,8-tetrahydrofolate + H2O = 2-dehydropantoate + (6S)-5,6,7,8-tetrahydrofolate. It functions in the pathway cofactor biosynthesis; (R)-pantothenate biosynthesis; (R)-pantoate from 3-methyl-2-oxobutanoate: step 1/2. Catalyzes the reversible reaction in which hydroxymethyl group from 5,10-methylenetetrahydrofolate is transferred onto alpha-ketoisovalerate to form ketopantoate. This is 3-methyl-2-oxobutanoate hydroxymethyltransferase from Carboxydothermus hydrogenoformans (strain ATCC BAA-161 / DSM 6008 / Z-2901).